We begin with the raw amino-acid sequence, 132 residues long: Small ribosomal subunit protein uS8 (132 aa).

The protein belongs to the universal ribosomal protein uS8 family. In terms of assembly, part of the 30S ribosomal subunit. Contacts proteins S5 and S12.

In terms of biological role, one of the primary rRNA binding proteins, it binds directly to 16S rRNA central domain where it helps coordinate assembly of the platform of the 30S subunit. This Anaeromyxobacter dehalogenans (strain 2CP-C) protein is Small ribosomal subunit protein uS8.